The chain runs to 230 residues: Broad specificity amino-acid racemase YgeA (230 aa).

Residues Met-10, Gln-52, and 83-85 (TNT) each bind substrate. Thr-83 serves as the catalytic Proton donor. The Proton acceptor role is filled by Cys-197. Residue 198 to 199 (TE) coordinates substrate.

The protein belongs to the aspartate/glutamate racemases family.

It catalyses the reaction an L-alpha-amino acid = a D-alpha-amino acid. The enzyme catalyses L-homoserine = D-homoserine. Amino-acid racemase able to utilize a broad range of substrates. Highest activity is observed with L-homoserine and D-homoserine. Has tenfold lower activity against L-methionine, L-leucine, L-valine and L-histidine. Has low activity with L-norvaline, L-asparagine, D-methionine, L-aminobutyric acid, L-isoleucine, L-serine, L-norleucine, L-alanine, L-glutamine, LL-diaminopimelic acid and L-phenylalanine. Has no activity against ten L-amino acids (Thr, Glu, Asp, Arg, Lys, Tyr, Trp, Orn, Cit and Aad). D-amino acids might be used as components of peptidoglycan and/or be involved in peptidoglycan metabolism and remodeling. This chain is Broad specificity amino-acid racemase YgeA (ygeA), found in Escherichia coli (strain K12).